The sequence spans 260 residues: Hydroxyethylthiazole kinase 1 (260 aa).

Met39 contacts substrate. The ATP site is built by Arg115 and Thr160. Residue Gly187 participates in substrate binding.

Belongs to the Thz kinase family. Mg(2+) is required as a cofactor.

The catalysed reaction is 5-(2-hydroxyethyl)-4-methylthiazole + ATP = 4-methyl-5-(2-phosphooxyethyl)-thiazole + ADP + H(+). Its pathway is cofactor biosynthesis; thiamine diphosphate biosynthesis; 4-methyl-5-(2-phosphoethyl)-thiazole from 5-(2-hydroxyethyl)-4-methylthiazole: step 1/1. Its function is as follows. Catalyzes the phosphorylation of the hydroxyl group of 4-methyl-5-beta-hydroxyethylthiazole (THZ). In Streptococcus pneumoniae serotype 19F (strain G54), this protein is Hydroxyethylthiazole kinase 1.